The following is a 394-amino-acid chain: GDNF family receptor alpha-like (394 aa).

The N-terminal stretch at 1–19 is a signal peptide; it reads MLVFIFLAVRLSSENESSS. At 20 to 350 the chain is on the extracellular side; sequence QTNDCAYFMR…LTGFNSPFSG (331 aa). N-linked (GlcNAc...) asparagine glycosylation is found at Asn-65, Asn-101, and Asn-115. Disulfide bonds link Cys-132–Cys-190, Cys-139–Cys-145, Cys-156–Cys-168, Cys-163–Cys-211, Cys-192–Cys-199, Cys-221–Cys-292, Cys-228–Cys-234, Cys-245–Cys-276, Cys-253–Cys-259, Cys-270–Cys-317, and Cys-294–Cys-305. The interval 150–229 is required for interaction with GDF15; sequence ALYLKACTAN…TCLSVIHTCR (80 aa). A helical membrane pass occupies residues 351-371; sequence ELIYVVVCMVVTSGILSLVML. The Cytoplasmic segment spans residues 372-394; the sequence is KLRIPSKKRDPAPIEIAGAVIIQ.

The protein belongs to the GDNFR family. In terms of assembly, interacts (via the extracellular domain) with GDF15 and RET; receptor of GDF15, mediates cellular signaling through interaction with RET after GDF15-binding. Interaction with RET requires previous GDF15-binding. Post-translationally, cleaved and inactivated by MMP14, inhibiting the GDF15-GFRAL aversive response. Expressed in the brainstem, restricted to cells in the area postrema and the immediately adjacent region of the nucleus tractus solitarius. Detected at low levels in testis.

It localises to the cell membrane. Its function is as follows. Brainstem-restricted receptor for GDF15 hormone, which triggers an aversive response, characterized by nausea, vomiting, and/or loss of appetite in response to various stresses. The aversive response is both required to reduce continuing exposure to those stresses at the time of exposure and to promote avoidance behavior in the future. The GDF15-GFRAL aversive response is triggered by stresses, such as anticancer drugs (camptothecin or cisplatin), cancers or drugs such as metformin. Upon interaction with its ligand, GDF15, mediates the GDF15-induced autophosphorylation and activation of the RET tyrosine kinase receptor, leading to activation of MAPK- and AKT- signaling pathways. Ligand-binding activates GFRAL-expressing neurons localized in the area postrema and nucleus tractus solitarius of the brainstem. The GDF15-GFRAL signal induces expression of genes involved in metabolism, such as lipid metabolism in adipose tissues. In Rattus norvegicus (Rat), this protein is GDNF family receptor alpha-like.